Here is a 328-residue protein sequence, read N- to C-terminus: Phosphate acyltransferase (328 aa).

This sequence belongs to the PlsX family. Homodimer. Probably interacts with PlsY.

The protein resides in the cytoplasm. It carries out the reaction a fatty acyl-[ACP] + phosphate = an acyl phosphate + holo-[ACP]. It functions in the pathway lipid metabolism; phospholipid metabolism. Functionally, catalyzes the reversible formation of acyl-phosphate (acyl-PO(4)) from acyl-[acyl-carrier-protein] (acyl-ACP). This enzyme utilizes acyl-ACP as fatty acyl donor, but not acyl-CoA. In Mycoplasma pneumoniae (strain ATCC 29342 / M129 / Subtype 1) (Mycoplasmoides pneumoniae), this protein is Phosphate acyltransferase.